We begin with the raw amino-acid sequence, 296 residues long: MVLMMGVPQHFALSTARDYWQLLKPRIMYLVVFTASTGMIMAPGTIHPLIGLVSALCIAMGSGAAGALNMWFDSDIDAVMSRTKTRPIPSGRISRAQALECGLALSLLSVFIMSLTVNYVSAILLACSIAFYAVVYTMVLKRRTPQNIVIGGIAGAFPPVIGWTSVTGIPSIESLLLFMIIFLWTPPHFWALSLLNRDEYKLAGIPMLSVYSVQSTKNHIMGYSLLLFIVALLPGLYVAETVLYEIIATSLGAVFLTHAYCLLKEVGEPSPKACMGLFSFSIYYLFLIFSAIALCS.

Transmembrane regions (helical) follow at residues 27 to 47 (IMYL…GTIH), 48 to 68 (PLIG…AGAL), 98 to 118 (ALEC…LTVN), 120 to 140 (VSAI…TMVL), 148 to 168 (IVIG…SVTG), 175 to 195 (LLLF…LSLL), 219 to 239 (HIMG…LYVA), 242 to 262 (VLYE…AYCL), and 274 to 294 (CMGL…AIAL).

It belongs to the UbiA prenyltransferase family. Protoheme IX farnesyltransferase subfamily.

It is found in the cell inner membrane. The enzyme catalyses heme b + (2E,6E)-farnesyl diphosphate + H2O = Fe(II)-heme o + diphosphate. The protein operates within porphyrin-containing compound metabolism; heme O biosynthesis; heme O from protoheme: step 1/1. In terms of biological role, converts heme B (protoheme IX) to heme O by substitution of the vinyl group on carbon 2 of heme B porphyrin ring with a hydroxyethyl farnesyl side group. The sequence is that of Protoheme IX farnesyltransferase from Anaplasma phagocytophilum (strain HZ).